Consider the following 568-residue polypeptide: Urease subunit alpha (568 aa).

The 438-residue stretch at 131–568 (GGIDTHIHFI…LPMAQRYFLF (438 aa)) folds into the Urease domain. Ni(2+) contacts are provided by His-136, His-138, and Lys-219. Lys-219 bears the N6-carboxylysine mark. Substrate is bound at residue His-221. 2 residues coordinate Ni(2+): His-248 and His-274. The active-site Proton donor is the His-322. Asp-362 contributes to the Ni(2+) binding site.

This sequence belongs to the metallo-dependent hydrolases superfamily. Urease alpha subunit family. Heterotrimer of UreA (gamma), UreB (beta) and UreC (alpha) subunits. Three heterotrimers associate to form the active enzyme. The cofactor is Ni cation. Carboxylation allows a single lysine to coordinate two nickel ions.

It localises to the cytoplasm. The enzyme catalyses urea + 2 H2O + H(+) = hydrogencarbonate + 2 NH4(+). The protein operates within nitrogen metabolism; urea degradation; CO(2) and NH(3) from urea (urease route): step 1/1. The sequence is that of Urease subunit alpha from Nostoc sp. (strain PCC 7120 / SAG 25.82 / UTEX 2576).